We begin with the raw amino-acid sequence, 227 residues long: Nitrobenzene nitroreductase (227 aa).

14-18 is an FMN binding site; it reads RRAKR. The NADP(+) site is built by Ser-44 and Ile-109. Residues 172-173 and Lys-215 contribute to the FMN site; that span reads VF.

This sequence belongs to the nitroreductase family. Monomer. It depends on FMN as a cofactor.

It catalyses the reaction N-phenylhydroxylamine + 2 NADP(+) + H2O = nitrobenzene + 2 NADPH + 2 H(+). The protein operates within xenobiotic degradation; nitrobenzene degradation. Inhibited by dicumarol, p-hydroxymercuribenzoate and salicyl hydroxamate. In terms of biological role, involved in the biodegradation of nitroaromatic compounds. Catalyzes the two-electron reduction of nitrobenzene (NB) to produce a nitrosobenzene (NOB) intermediate, which is immediately reduced to hydroxylaminobenzene (HAB) by a second two-electron transfer. Also active on menadione and nitrofurazone. Replacing NADPH with NADH results in a 4-fold decrease in the reaction rate. The protein is Nitrobenzene nitroreductase of Ectopseudomonas oleovorans (Pseudomonas oleovorans).